Consider the following 690-residue polypeptide: Wilms tumor protein 1-interacting protein homolog (690 aa).

2 disordered regions span residues 151 to 316 (MSAT…VSPR) and 328 to 372 (TLGS…PRSS). Over residues 152-186 (SATSPRSSMASSASSSQEHSKYSSPRSSISSNALS) the composition is skewed to low complexity. Polar residues-rich tracts occupy residues 204-214 (EKYTSPRSSLG), 223-233 (PRSSYASTTSD), 240-261 (PRAS…TSGI), and 272-292 (PRSS…SYSD). The span at 335–357 (SVVSPRSSISSHSSRSSRSSRGS) shows a compositional bias: low complexity. 3 consecutive LIM zinc-binding domains span residues 479-540 (GICI…SGFQ), 544-603 (DKCF…TVFA), and 604-673 (PKCA…RLSV).

Belongs to the zyxin/ajuba family. Interacts with prickle3.

It localises to the cell junction. The protein localises to the adherens junction. It is found in the nucleus. May monitor slit diaphragm protein assembly, a specialized adherens junction characteristic of podocytes. In case of podocyte injury, it shuttles into the nucleus and acts as a transcription regulator. Plays a role in the regulation of cell morphology and cytoskeletal organization. Acts as a transcriptional corepressor for snai1 and snai2/slug and plays a role in regulating neural crest development. Involved in the organization of the basal body. Involved in cilia growth and positioning. This is Wilms tumor protein 1-interacting protein homolog (wtip) from Xenopus laevis (African clawed frog).